The primary structure comprises 339 residues: MELQGWILHCRAGYEQTLASEATMAAHERDVHGYCRARAQSAYVVFHAPAGDAPLPPQLVFARAGAGLIGELQGLPEGGRAEAIAAALPPAVGSATPWVEHPDSDAGRPLARFCRRFTGPLRHALTQTGVTSGDPQRRLRLLFPDSRHCFAGIGPREGWPSGIPRLRMPRNAPSRSVLKLEEALHRLVPENERPYPGEHAVDLGAAPGGWTWLLRERGLTVTAIDNGPLAPALADDPGVEHQRTDAFRFRPRTEVDWLVCDVVDRPQGIARLMTQWLREEWARAAIFNLKLPMRRPLETVRQALDAVRTTGARAHAAQLYHDREEITVYARRMASRNRP.

S-adenosyl-L-methionine is bound by residues S176, 206–209 (APGG), D225, D245, and D261. K290 acts as the Proton acceptor in catalysis.

Belongs to the class I-like SAM-binding methyltransferase superfamily. RNA methyltransferase RlmE family. RlmM subfamily. Monomer.

It is found in the cytoplasm. The catalysed reaction is cytidine(2498) in 23S rRNA + S-adenosyl-L-methionine = 2'-O-methylcytidine(2498) in 23S rRNA + S-adenosyl-L-homocysteine + H(+). In terms of biological role, catalyzes the 2'-O-methylation at nucleotide C2498 in 23S rRNA. The chain is Ribosomal RNA large subunit methyltransferase M from Halorhodospira halophila (strain DSM 244 / SL1) (Ectothiorhodospira halophila (strain DSM 244 / SL1)).